The chain runs to 816 residues: Two pore channel protein 1 (816 aa).

Topologically, residues 1–112 (MAVSLDDDVP…AHNHLFYLME (112 aa)) are cytoplasmic. The disordered stretch occupies residues 17–64 (EGGSAPLAPSNGLGQEELPSKNGGSYAIHDSQAPSLSSGGESSPSSPA). The span at 50-63 (PSLSSGGESSPSSP) shows a compositional bias: low complexity. A helical transmembrane segment spans residues 113–133 (LATALLLLLLSLCEAPAVPAL). Arg134 is a topological domain (extracellular). A helical transmembrane segment spans residues 135-155 (LGIYVHATLELFALMVVVFEL). At 156-177 (CMKLRWLGLHTFIRHKRTMVKT) the chain is on the cytoplasmic side. The helical transmembrane segment at 178–198 (SVLVVQFVEAIVVLVRQMSHV) threads the bilayer. Residues 199–200 (RV) lie on the Extracellular side of the membrane. The helical transmembrane segment at 201–220 (TRALRCIFLVDCRYCGGVRR) threads the bilayer. The Cytoplasmic segment spans residues 221 to 234 (NLRQIFQSLPPFMD). Residues 235–255 (ILLLLLFFMIIFAILGFYLFS) form a helical membrane-spanning segment. The Extracellular portion of the chain corresponds to 256–262 (PNPSDPY). The helical; Pore-forming intramembrane region spans 263–286 (FSTLENSIVSLFVLLTTANFPDVM). Over 287-294 (MPSYSRNP) the chain is Extracellular. A helical membrane pass occupies residues 295-315 (WSCVFFIVYLSIELYFIMNLL). The Cytoplasmic segment spans residues 316-444 (LAVVFDTFND…NILVKSKAFQ (129 aa)). A helical transmembrane segment spans residues 445-465 (YFMYLVVAVNGVWILVETFML). Residues 466 to 479 (KGGNFFSKHVPWSY) are Extracellular-facing. Residues 480-500 (LVFLTIYGVELFLKVAGLGPV) form a helical membrane-spanning segment. Topologically, residues 501 to 503 (EYL) are cytoplasmic. Residues 504-526 (SSGWNLFDFSVTVFAFLGLLALA) form a helical membrane-spanning segment. The Extracellular portion of the chain corresponds to 527–534 (LNMEPFYF). A helical membrane pass occupies residues 535–549 (IVVLRPLQLLRLFKL). Topologically, residues 550–573 (KERYRNVLDTMFELLPRMASLGLT) are cytoplasmic. The helical transmembrane segment at 574–594 (LLIFYYSFAIVGMEFFCGIVF) threads the bilayer. Residues 595 to 629 (PNCCNTSTVADAYRWRNHTVGNRTVVEEGYYYLNN) lie on the Extracellular side of the membrane. N-linked (GlcNAc...) asparagine glycans are attached at residues Asn599, Asn611, and Asn616. Residues 630–653 (FDNILNSFVTLFELTVVNNWYIIM) constitute an intramembrane region (helical; Pore-forming). Topologically, residues 654–670 (EGVTSQTSHWSRLYFMT) are extracellular. The chain crosses the membrane as a helical span at residues 671–691 (FYIVTMVVMTIIVAFILEAFV). Over 692 to 816 (FRMNYSRKNQ…GSRQRSQTVT (125 aa)) the chain is Cytoplasmic. Positions 769–796 (SLKMYQEEIQEWYEEHAREQEQQRQLSS) form a coiled coil. Residues 782–816 (EEHAREQEQQRQLSSSAAPAAQQPPGSRQRSQTVT) are disordered. Positions 791-816 (QRQLSSSAAPAAQQPPGSRQRSQTVT) are enriched in low complexity.

It belongs to the calcium channel alpha-1 subunit (TC 1.A.1.11) family. Two pore calcium channel subfamily. Dimer. Interacts with MTOR; the interaction is required for TPCN1 ATP sensitivity. Interacts with STX7, STX8 and STX12. Interacts with JPT2. Found in a complex with LSM12, TPCN1 and TPCN2. N-glycosylated. In terms of tissue distribution, highest expression found in the heart and kidney, and lowest expression found in the spleen.

Its subcellular location is the lysosome membrane. The protein resides in the endosome membrane. It localises to the early endosome membrane. The protein localises to the recycling endosome membrane. It carries out the reaction Na(+)(in) = Na(+)(out). The enzyme catalyses Ca(2+)(in) = Ca(2+)(out). Na(+) current is inhibited by ATP in a MTORC-dependent manner. ATP sensitivity is independent of PI(3,5)P2. Probably regulated by Mg(2+) ions, cytosolic Mg(2+) selectively inhibits outward current while lysosomal Mg(2+) modestly inhibits both the outward and inward currents. In the absence of Mg(2+), NAADP readily activates TPCN2, with properties similar to PI(3,5)P2. Both current elicited by PI(3,5)P2 as well as NAADP are inhibited by tetrandrine. Its function is as follows. Intracellular channel initially characterized as a non-selective Ca(2+)-permeable channel activated by NAADP (nicotinic acid adenine dinucleotide phosphate), it is also a voltage-gated highly-selective Na(+) channel activated directly by PI(3,5)P2 (phosphatidylinositol 3,5-bisphosphate) that senses pH changes and confers electrical excitability to organelles. Localizes to the early and recycling endosomes membranes where it plays a role in the uptake and processing of proteins and regulates organellar membrane excitability, membrane trafficking and pH homeostasis. Ion selectivity is not fixed but rather agonist-dependent and under defined ionic conditions, can be readily activated by both NAADP and PI(3,5)P2. Required for mTOR-dependent nutrient sensing. In terms of biological role, (Microbial infection) During Ebola virus (EBOV) infection, controls the movement of endosomes containing virus particles and is required by EBOV to escape from the endosomal network into the cell cytoplasm. This is Two pore channel protein 1 from Homo sapiens (Human).